Consider the following 219-residue polypeptide: Proteasome subunit beta type-9 (219 aa).

Positions 1 to 20 (MLRAGAPTAGSFRTEEVHTG) are cleaved as a propeptide — removed in mature form. Thr-21 functions as the Nucleophile in the catalytic mechanism. N6-acetyllysine occurs at positions 53 and 109.

It belongs to the peptidase T1B family. In terms of assembly, the 26S proteasome consists of a 20S proteasome core and two 19S regulatory subunits. The 20S proteasome core is composed of 28 subunits that are arranged in four stacked rings, resulting in a barrel-shaped structure. The two end rings are each formed by seven alpha subunits, and the two central rings are each formed by seven beta subunits. The catalytic chamber with the active sites is on the inside of the barrel. Component of the immunoproteasome, where it displaces the equivalent housekeeping subunit PSMB6. Component of the spermatoproteasome, a form of the proteasome specifically found in testis. Post-translationally, autocleaved. The resulting N-terminal Thr residue of the mature subunit is responsible for the nucleophile proteolytic activity.

Its subcellular location is the cytoplasm. The protein localises to the nucleus. It carries out the reaction Cleavage of peptide bonds with very broad specificity.. Its function is as follows. The proteasome is a multicatalytic proteinase complex which is characterized by its ability to cleave peptides with Arg, Phe, Tyr, Leu, and Glu adjacent to the leaving group at neutral or slightly basic pH. The proteasome has an ATP-dependent proteolytic activity. This subunit is involved in antigen processing to generate class I binding peptides. The chain is Proteasome subunit beta type-9 (Psmb9) from Mus terricolor (Earth-colored mouse).